Reading from the N-terminus, the 510-residue chain is NAD(P)H-quinone oxidoreductase subunit 2, chloroplastic (510 aa).

12 helical membrane passes run 24–44, 59–79, 99–119, 124–144, 149–169, 184–204, 229–249, 295–315, 323–343, 347–367, 395–415, and 418–438; these read LLLF…GLIL, WFYF…LFRW, IFQF…VEYI, MAIT…MFLC, LITI…LSGY, LLMG…LYGL, ISIA…PAPF, WHLL…LIAI, MLAY…IVGD, GYAS…GTFA, ALSL…AGFF, and LHLF…IGLL.

It belongs to the complex I subunit 2 family. As to quaternary structure, NDH is composed of at least 16 different subunits, 5 of which are encoded in the nucleus.

It is found in the plastid. Its subcellular location is the chloroplast thylakoid membrane. It carries out the reaction a plastoquinone + NADH + (n+1) H(+)(in) = a plastoquinol + NAD(+) + n H(+)(out). It catalyses the reaction a plastoquinone + NADPH + (n+1) H(+)(in) = a plastoquinol + NADP(+) + n H(+)(out). Its function is as follows. NDH shuttles electrons from NAD(P)H:plastoquinone, via FMN and iron-sulfur (Fe-S) centers, to quinones in the photosynthetic chain and possibly in a chloroplast respiratory chain. The immediate electron acceptor for the enzyme in this species is believed to be plastoquinone. Couples the redox reaction to proton translocation, and thus conserves the redox energy in a proton gradient. This chain is NAD(P)H-quinone oxidoreductase subunit 2, chloroplastic, found in Muilla maritima (Sea muilla).